The chain runs to 268 residues: NAC transcription factor 29 (268 aa).

The NAC domain occupies Leu9–Lys161. The DNA-binding element occupies Val106 to Leu167.

In terms of tissue distribution, expressed in senescing leaves, petals and sepals.

It localises to the nucleus. Its function is as follows. Transcription activator that binds to, and transactivates the promoter of the abscisic aldehyde oxidase AAO3. Promotes chlorophyll degradation in leaves by enhancing transcription of AAO3, which leads to increased levels of the senescence-inducing hormone abscisic acid (ABA). Involved in the control of dehydration in senescing leaves. Binds to the DNA sequence 5'-CACGTAAGT-3' of SAG113 promoter. SAG113 acts as a negative regulator of ABA signaling for stomatal closure in leaves, and controls water loss during leaf senescence. Transcription factor of the NAC family involved in senescence. May function in the transition between active cell division and cell expansion. Required for normal seed development and morphology. In Arabidopsis thaliana (Mouse-ear cress), this protein is NAC transcription factor 29 (NAC029).